The following is a 554-amino-acid chain: Hydroxylamine reductase (554 aa).

Positions 3, 6, 18, and 25 each coordinate [2Fe-2S] cluster. 8 residues coordinate hybrid [4Fe-2O-2S] cluster: His252, Glu276, Cys320, Cys408, Cys436, Cys461, Glu495, and Lys497. The residue at position 408 (Cys408) is a Cysteine persulfide.

Belongs to the HCP family. [2Fe-2S] cluster serves as cofactor. The cofactor is hybrid [4Fe-2O-2S] cluster.

Its subcellular location is the cytoplasm. The catalysed reaction is A + NH4(+) + H2O = hydroxylamine + AH2 + H(+). Functionally, catalyzes the reduction of hydroxylamine to form NH(3) and H(2)O. The chain is Hydroxylamine reductase from Photobacterium profundum (strain SS9).